A 281-amino-acid polypeptide reads, in one-letter code: Probable endonuclease 4 (281 aa).

His69, His109, Glu145, Asp179, His182, His216, Asp229, His231, and Glu261 together coordinate Zn(2+).

The protein belongs to the AP endonuclease 2 family. It depends on Zn(2+) as a cofactor.

The catalysed reaction is Endonucleolytic cleavage to 5'-phosphooligonucleotide end-products.. Its function is as follows. Endonuclease IV plays a role in DNA repair. It cleaves phosphodiester bonds at apurinic or apyrimidinic (AP) sites, generating a 3'-hydroxyl group and a 5'-terminal sugar phosphate. This Buchnera aphidicola subsp. Acyrthosiphon pisum (strain APS) (Acyrthosiphon pisum symbiotic bacterium) protein is Probable endonuclease 4.